A 207-amino-acid chain; its full sequence is Ribosomal RNA small subunit methyltransferase G (207 aa).

S-adenosyl-L-methionine is bound by residues glycine 74, leucine 79, 125–126 (VE), and arginine 140.

Belongs to the methyltransferase superfamily. RNA methyltransferase RsmG family.

It localises to the cytoplasm. It carries out the reaction guanosine(527) in 16S rRNA + S-adenosyl-L-methionine = N(7)-methylguanosine(527) in 16S rRNA + S-adenosyl-L-homocysteine. Its function is as follows. Specifically methylates the N7 position of guanine in position 527 of 16S rRNA. The sequence is that of Ribosomal RNA small subunit methyltransferase G from Shewanella piezotolerans (strain WP3 / JCM 13877).